The primary structure comprises 665 residues: MTKYSESYCDVLIVGAGPAGLMAARVLSEYVRQKPDLKVRIIDKRSTKVYNGQADGLQCRTLESLKNLGLADKILSEANDMSTIALYNPDENGHIRRTDRIPDTLPGISRYHQVVLHQGRIERHILDSIAEISDTRIKVERPLIPEKMEIDSSKAEDPEAYPVTMTLRYMSDHESTPLQFGHKTENSLFHSNLQTQEEEDANYRLPEGKEAGEIETVHCKYVIGCDGGHSWVRRTLGFEMIGEQTDYIWGVLDAVPASNFPDIRSPCAIHSAESGSIMIIPRENNLVRFYVQLQARAEKGGRVDRTKFTPEVVIANAKKIFHPYTFDVQQLDWFTAYHIGQRVTEKFSKDERVFIAGDACHTHSPKAGQGMNTSMMDTYNLGWKLGLVLTGRAKRDILKTYEEERHAFAQALIDFDHQFSRLFSGRPAKDVADEMGVSMDVFKEAFVKGNEFASGTAINYDENLVTDKKSSKQELAKNCVVGTRFKSQPVVRHSEGLWMHFGDRLVTDGRFRIIVFAGKATDATQMSRIKKFSAYLDSENSVISLYTPKVSDRNSRIDVITIHSCHRDDIEMHDFPAPALHPKWQYDFIYADCDSWHHPHPKSYQAWGVDETKGAVVVVRPDGYTSLVTDLEGTAEIDRYFSGILVEPKEKSGAQTEADWTKSTA.

FAD is bound by residues 18 to 19, 43 to 45, 51 to 56, Q118, Y290, D358, and 368 to 372; these read PA, DKR, NGQADG, and GQGMN. D55 is a substrate binding site. Substrate is bound at residue Y290.

This sequence belongs to the PheA/TfdB FAD monooxygenase family. Homodimer. It depends on FAD as a cofactor.

It catalyses the reaction phenol + NADPH + O2 + H(+) = catechol + NADP(+) + H2O. The protein operates within aromatic compound metabolism; phenol degradation. Inhibited by excess phenol. Heavy metals such AsCuSO(4), AgNO(3), or HgCl(2) severely inhibit activity. Its function is as follows. Hydroxylates phenol to catechol. Phenol is the best substrate, but the enzyme also accepts isomeric diphenols, hydroxyl-, amino-, halogen- or methyl-substituted phenols and, to a lesser degree, cresols. The sequence is that of Phenol hydroxylase from Cutaneotrichosporon cutaneum (Yeast).